Consider the following 715-residue polypeptide: DNA-directed RNA polymerase subunit beta' (715 aa).

4 residues coordinate Zn(2+): Cys-69, Cys-71, Cys-87, and Cys-90. The disordered stretch occupies residues 244-272 (APESQSEVIEAQGPVPQAEEEKQRDQSIQ). 3 residues coordinate Mg(2+): Asp-520, Asp-522, and Asp-524.

The protein belongs to the RNA polymerase beta' chain family. RpoC1 subfamily. In terms of assembly, in plastids the minimal PEP RNA polymerase catalytic core is composed of four subunits: alpha, beta, beta', and beta''. When a (nuclear-encoded) sigma factor is associated with the core the holoenzyme is formed, which can initiate transcription. It depends on Mg(2+) as a cofactor. Requires Zn(2+) as cofactor.

It is found in the plastid. The protein localises to the chloroplast. The catalysed reaction is RNA(n) + a ribonucleoside 5'-triphosphate = RNA(n+1) + diphosphate. Functionally, DNA-dependent RNA polymerase catalyzes the transcription of DNA into RNA using the four ribonucleoside triphosphates as substrates. The protein is DNA-directed RNA polymerase subunit beta' of Zygnema circumcarinatum (Green alga).